The chain runs to 507 residues: Solute carrier family 2, facilitated glucose transporter member 6 (507 aa).

A disordered region spans residues 1–28 (MQEPLLGAEGPDYDTFPEKPPPSPGDRA). Residues 1-37 (MQEPLLGAEGPDYDTFPEKPPPSPGDRARVGTLQNKR) are Cytoplasmic-facing. The Dileucine internalization motif signature appears at 5-6 (LL). Phosphoserine is present on serine 23. A helical membrane pass occupies residues 38–58 (VFLATFAAVLGNFSFGYALVY). Residues 59–81 (TSPVIPALERSLDPDLHLTKSQA) lie on the Extracellular side of the membrane. Residues 82–102 (SWFGSVFTLGAAAGGLSAMIL) traverse the membrane as a helical segment. Residues 103–111 (NDLLGRKLS) are Cytoplasmic-facing. The helical transmembrane segment at 112-132 (IMFSAVPSAAGYALMAGAHGL) threads the bilayer. Residues 133 to 140 (WMLLLGRT) are Extracellular-facing. The chain crosses the membrane as a helical span at residues 141–161 (LTGFAGGLTAACIPVYVSEIA). Over 162–168 (PPGVRGA) the chain is Cytoplasmic. A helical transmembrane segment spans residues 169-189 (LGATPQLMAVFGSLSLYALGL). Position 174 (glutamine 174) interacts with a D-hexose. Residues 190–194 (LLPWR) are Extracellular-facing. The helical transmembrane segment at 195-215 (WLAVAGEAPVLIMILLLSFMP) threads the bilayer. Over 216–289 (NSPRFLLSRG…LLMRLLQQLT (74 aa)) the chain is Cytoplasmic. 286-287 (QQ) is an a D-hexose binding site. A helical membrane pass occupies residues 290–310 (GITPILVYLQSIFDSTAVLLP). The Extracellular portion of the chain corresponds to 311-314 (PKDD). A helical membrane pass occupies residues 315–335 (AAIVGAVRLLSVLIAALTMDL). Topologically, residues 336–339 (AGRK) are cytoplasmic. A helical transmembrane segment spans residues 340–360 (VLLFVSAAIMFAANLTLGLYI). Residues 361–395 (HFGPRPLSPNSTAGLESESWGDLAQPLAAPAGYLT) lie on the Extracellular side of the membrane. N-linked (GlcNAc...) asparagine glycosylation occurs at asparagine 370. Residues 396 to 416 (LVPLLATMLFIMGYAVGWGPI) traverse the membrane as a helical segment. At 417–435 (TWLLMSEVLPLRARGVASG) the chain is on the cytoplasmic side. Position 418 (tryptophan 418) interacts with a D-hexose. Residues 436 to 456 (LCVLASWLTAFVLTKSFLPVV) traverse the membrane as a helical segment. Topologically, residues 457-462 (STFGLQ) are extracellular. The chain crosses the membrane as a helical span at residues 463 to 483 (VPFFFFAAICLVSLVFTGCCV). The Cytoplasmic segment spans residues 484–507 (PETKGRSLEQIESFFRTGRRSFLR).

This sequence belongs to the major facilitator superfamily. Sugar transporter (TC 2.A.1.1) family. Glucose transporter subfamily. Highly expressed in brain, spleen and peripheral blood leukocytes.

It localises to the lysosome membrane. In terms of biological role, probable sugar transporter that acts as a regulator of glycolysis in macrophages. Does not transport glucose. This chain is Solute carrier family 2, facilitated glucose transporter member 6, found in Homo sapiens (Human).